We begin with the raw amino-acid sequence, 346 residues long: Anthranilate phosphoribosyltransferase (346 aa).

5-phospho-alpha-D-ribose 1-diphosphate is bound by residues Gly-81, 84-85 (GD), 91-94 (NVST), 109-117 (KHGNRSVSS), and Ser-121. An anthranilate-binding site is contributed by Gly-81. Mg(2+) is bound at residue Ser-93. An anthranilate-binding site is contributed by Asn-112. Arg-167 contacts anthranilate. Mg(2+) contacts are provided by Asp-226 and Glu-227.

Belongs to the anthranilate phosphoribosyltransferase family. Homodimer. Requires Mg(2+) as cofactor.

The catalysed reaction is N-(5-phospho-beta-D-ribosyl)anthranilate + diphosphate = 5-phospho-alpha-D-ribose 1-diphosphate + anthranilate. It participates in amino-acid biosynthesis; L-tryptophan biosynthesis; L-tryptophan from chorismate: step 2/5. Catalyzes the transfer of the phosphoribosyl group of 5-phosphorylribose-1-pyrophosphate (PRPP) to anthranilate to yield N-(5'-phosphoribosyl)-anthranilate (PRA). The polypeptide is Anthranilate phosphoribosyltransferase (Hahella chejuensis (strain KCTC 2396)).